We begin with the raw amino-acid sequence, 248 residues long: Triosephosphate isomerase (248 aa).

2 residues coordinate substrate: Asn12 and Lys14. The igE-binding stretch occupies residues 16–30 (NGDRAGIDSIISFMK). His95 serves as the catalytic Electrophile. The active-site Proton acceptor is Glu165. IgE-binding regions lie at residues 166 to 180 (PVWA…TPEQ) and 205 to 219 (RIIY…NCKE).

This sequence belongs to the triosephosphate isomerase family. Homodimer. As to expression, expressed in skeletal muscle (at protein level).

The protein resides in the cytoplasm. The enzyme catalyses D-glyceraldehyde 3-phosphate = dihydroxyacetone phosphate. It carries out the reaction dihydroxyacetone phosphate = methylglyoxal + phosphate. It participates in carbohydrate biosynthesis; gluconeogenesis. It functions in the pathway carbohydrate degradation; glycolysis; D-glyceraldehyde 3-phosphate from glycerone phosphate: step 1/1. Functionally, triosephosphate isomerase is an extremely efficient metabolic enzyme that catalyzes the interconversion between dihydroxyacetone phosphate (DHAP) and D-glyceraldehyde-3-phosphate (G3P) in glycolysis and gluconeogenesis. In terms of biological role, it is also responsible for the non-negligible production of methylglyoxal a reactive cytotoxic side-product that modifies and can alter proteins, DNA and lipids. The sequence is that of Triosephosphate isomerase from Procambarus clarkii (Red swamp crayfish).